The following is a 319-amino-acid chain: Aspartate carbamoyltransferase catalytic subunit (319 aa).

Positions 57 and 58 each coordinate carbamoyl phosphate. K85 lines the L-aspartate pocket. Residues R107, H140, and Q143 each contribute to the carbamoyl phosphate site. The L-aspartate site is built by R173 and R227. Carbamoyl phosphate is bound by residues G268 and P269.

This sequence belongs to the aspartate/ornithine carbamoyltransferase superfamily. ATCase family. As to quaternary structure, heterododecamer (2C3:3R2) of six catalytic PyrB chains organized as two trimers (C3), and six regulatory PyrI chains organized as three dimers (R2).

The catalysed reaction is carbamoyl phosphate + L-aspartate = N-carbamoyl-L-aspartate + phosphate + H(+). It participates in pyrimidine metabolism; UMP biosynthesis via de novo pathway; (S)-dihydroorotate from bicarbonate: step 2/3. Its function is as follows. Catalyzes the condensation of carbamoyl phosphate and aspartate to form carbamoyl aspartate and inorganic phosphate, the committed step in the de novo pyrimidine nucleotide biosynthesis pathway. The polypeptide is Aspartate carbamoyltransferase catalytic subunit (Mycobacterium tuberculosis (strain ATCC 25177 / H37Ra)).